The primary structure comprises 812 residues: Lon protease (812 aa).

The Lon N-terminal domain occupies 11-204 (IPVLPLRDVV…YLMAMMESEI (194 aa)). 356-363 (GPPGVGKT) is an ATP binding site. The Lon proteolytic domain maps to 592 to 773 (ENRVGQVTGL…EEEQTLSLQN (182 aa)). Residues Ser-679 and Lys-722 contribute to the active site. The span at 745–764 (KENPDNAKADQDRHPVKNNE) shows a compositional bias: basic and acidic residues. Residues 745-766 (KENPDNAKADQDRHPVKNNEEE) form a disordered region.

The protein belongs to the peptidase S16 family. As to quaternary structure, homohexamer. Organized in a ring with a central cavity. ATP binding and hydrolysis do not affect the oligomeric state of the enzyme.

The protein resides in the cytoplasm. The catalysed reaction is Hydrolysis of proteins in presence of ATP.. With respect to regulation, contains an allosteric site (distinct from its active site), whose occupancy by an unfolded polypeptide leads to enzyme activation. ATP-dependent serine protease that mediates the selective degradation of mutant and abnormal proteins as well as certain short-lived regulatory proteins. Required for cellular homeostasis and for survival from DNA damage and developmental changes induced by stress. Degrades polypeptides processively to yield small peptide fragments that are 5 to 10 amino acids long. Binds to DNA in a double-stranded, site-specific manner. Endogenous substrates include the regulatory proteins RcsA and SulA, the transcriptional activator SoxS, and UmuD. Its overproduction specifically inhibits translation through at least two different pathways, one of them being the YoeB-YefM toxin-antitoxin system. The chain is Lon protease from Shigella dysenteriae serotype 1 (strain Sd197).